Consider the following 1087-residue polypeptide: Collagen alpha-2(I) chain (1087 aa).

The interval 1–931 (APDPGPGPMG…PGPAGGGYDV (931 aa)) is disordered. Low complexity-rich tracts occupy residues 83 to 120 (EPGA…AAGP), 150 to 159 (EPGPNGAVGP), and 166 to 187 (PGNN…AGAP). Residues 189-199 (FPGPRGGPGPQ) show a composition bias toward pro residues. The segment covering 201-211 (PQGAAGQRGLA) has biased composition (low complexity). Residues 218-227 (GVKGDGGPKG) are compositionally biased toward gly residues. Low complexity-rich tracts occupy residues 228–241 (EPGN…PGPQ), 278–321 (AAGP…AGPS), 335–345 (PRGQPGNLGFP), 360–384 (KGAT…TGAT), and 396–408 (QGAA…QGLP). Gly residues predominate over residues 409–418 (GPAGGAGEAG). The span at 443–453 (NPGAAGASGPQ) shows a compositional bias: low complexity. The span at 466–493 (GTDGGKGEPGAAGAAGGPGHQGPGGMPG) shows a compositional bias: gly residues. The span at 504–515 (KGEKGEAGHRGP) shows a compositional bias: basic and acidic residues. 3 stretches are compositionally biased toward low complexity: residues 560–602 (PAGA…TGAR), 613–640 (FPGA…PAGK), and 677–695 (PGPA…LGLQ). Positions 708 to 717 (GSPGGAGAVG) are enriched in gly residues. Low complexity-rich tracts occupy residues 718-740 (EPGR…LGLP) and 776-788 (PGSS…AGAP). Residues 792 to 812 (GPSGGAGRGNRGESGPGGAAG) are compositionally biased toward gly residues. Residues 813–828 (AVGPAGARGAAGPSGP) are compositionally biased toward low complexity. A compositionally biased stretch (basic and acidic residues) spans 829 to 843 (RGEKGVAGEKGERGL). Low complexity-rich tracts occupy residues 849 to 868 (LQGM…AGPN) and 897 to 909 (APGA…YVGP). The span at 910-924 (AGPPGSPGLPGPPGP) shows a compositional bias: pro residues. The 159-residue stretch at 929-1087 (YDVSGYDEYR…GLDLGPVCFK (159 aa)) folds into the Fibrillar collagen NC1 domain.

It belongs to the fibrillar collagen family.

Its subcellular location is the secreted. The protein resides in the extracellular space. The protein localises to the extracellular matrix. The polypeptide is Collagen alpha-2(I) chain (Epinephelus costae (Goldblotch grouper)).